The primary structure comprises 305 residues: P2Y purinoceptor 14 (305 aa).

Residues 1 to 29 (MDNTTTTEPPKQPCTRNTLITQQIIPMLY) lie on the Extracellular side of the membrane. Residue asparagine 3 is glycosylated (N-linked (GlcNAc...) asparagine). The helical transmembrane segment at 30 to 50 (CVVFITGVLLNGISGWIFFYV) threads the bilayer. Topologically, residues 51 to 55 (PSSKS) are cytoplasmic. Residues 56–76 (FIIYLKNIVVADFLMGLTFPF) traverse the membrane as a helical segment. Residues 77–96 (KVLSDSGLGPWQLNVFVFRV) lie on the Extracellular side of the membrane. A helical transmembrane segment spans residues 97–117 (SAVIFYVNMYVSIAFFGLISF). Residues 118 to 139 (DRYYKIVKPLLVSIVQSVNYSK) are Cytoplasmic-facing. The chain crosses the membrane as a helical span at residues 140 to 160 (VLSVLVWVLMLLLAVPNIILT). N-linked (GlcNAc...) asparagine glycosylation is present at asparagine 161. Topologically, residues 161–188 (NQSVKDVTNIQCMELKNELGRKWHKASN) are extracellular. The helical transmembrane segment at 189–209 (YVFVSIFWIVFLLLTVFYMAI) threads the bilayer. Residues 210 to 234 (TRKIFKSHLKSRKNSISVKRKSSRN) lie on the Cytoplasmic side of the membrane. A helical membrane pass occupies residues 235 to 255 (IFSIVLAFVACFAPYHVARIP). Residues 256-278 (YTKSQTEGHYSCQAKETLLYTKE) lie on the Extracellular side of the membrane. Residues 279–299 (FTLLLSAANVCLDPISISSYA) traverse the membrane as a helical segment. The Cytoplasmic portion of the chain corresponds to 300–305 (SRLEKS).

It belongs to the G-protein coupled receptor 1 family.

The protein resides in the cell membrane. In terms of biological role, receptor for UDP-glucose coupled to G-proteins. This chain is P2Y purinoceptor 14 (P2ry14), found in Rattus norvegicus (Rat).